Here is a 294-residue protein sequence, read N- to C-terminus: Serine/threonine-protein kinase Aurora-1 (294 aa).

One can recognise a Protein kinase domain in the interval 31-282; that stretch reads FDIGKPLGRG…LHKLLEHPWI (252 aa). Residues 37–45 and Lys-60 each bind ATP; that span reads LGRGKFGHV. Asp-154 serves as the catalytic Proton acceptor. A Phosphoserine modification is found at Ser-176. Thr-185 is modified (phosphothreonine).

Belongs to the protein kinase superfamily. Ser/Thr protein kinase family. Aurora subfamily. As to quaternary structure, interacts with TPX2. Post-translationally, phosphorylation at Thr-185 may regulate activity and degradation of AUR1 in a cell cycle dependent manner. Abundant in roots, flowers and flower buds, low or absent in expanded leaves, stems and siliques.

The protein resides in the nucleus membrane. It is found in the cytoplasm. Its subcellular location is the cytoskeleton. It localises to the spindle. The protein localises to the spindle pole. The protein resides in the phragmoplast. The catalysed reaction is L-seryl-[protein] + ATP = O-phospho-L-seryl-[protein] + ADP + H(+). It carries out the reaction L-threonyl-[protein] + ATP = O-phospho-L-threonyl-[protein] + ADP + H(+). Its function is as follows. Phosphorylates specifically 'Ser-10' of histone H3 in vitro and colocalizes with phosphorylated histone H3 during mitosis. Associates with cytoskeletal structures that are necessary for cytokinesis and with the microtubule spindle. Also colocalizes with gamma-tubulin and function in microtubule organizing centers (MTOCs). In contrast with the mammalian B-type Aurora, AUR1 has no kinase activity toward 'Ser-28' of histone H3. The sequence is that of Serine/threonine-protein kinase Aurora-1 (AUR1) from Arabidopsis thaliana (Mouse-ear cress).